A 70-amino-acid polypeptide reads, in one-letter code: U-scoloptoxin(20)-Sm1a (70 aa).

An N-terminal signal peptide occupies residues 1–24; the sequence is MKKRSQVFCIFIAMVLLILPLSMS.

It belongs to the scoloptoxin-20 family. Contains 3 disulfide bonds. Expressed by the venom gland.

The protein resides in the secreted. This Scolopendra morsitans (Tanzanian blue ringleg centipede) protein is U-scoloptoxin(20)-Sm1a.